Reading from the N-terminus, the 151-residue chain is Deoxyuridine 5'-triphosphate nucleotidohydrolase (151 aa).

Substrate contacts are provided by residues 70-72, N83, 87-89, and M97; these read RSG and LID.

Belongs to the dUTPase family. The cofactor is Mg(2+).

It catalyses the reaction dUTP + H2O = dUMP + diphosphate + H(+). It functions in the pathway pyrimidine metabolism; dUMP biosynthesis; dUMP from dCTP (dUTP route): step 2/2. In terms of biological role, this enzyme is involved in nucleotide metabolism: it produces dUMP, the immediate precursor of thymidine nucleotides and it decreases the intracellular concentration of dUTP so that uracil cannot be incorporated into DNA. The protein is Deoxyuridine 5'-triphosphate nucleotidohydrolase of Pseudomonas fluorescens (strain Pf0-1).